A 670-amino-acid chain; its full sequence is Transketolase, chromosomal (670 aa).

His32 contributes to the substrate binding site. Thiamine diphosphate contacts are provided by residues His72 and 120 to 122 (GPL). Asp161 is a binding site for Mg(2+). Gly162 and Asn191 together coordinate thiamine diphosphate. Mg(2+) is bound by residues Asn191 and Ile193. 3 residues coordinate substrate: His267, Arg364, and Ser391. His267 is a thiamine diphosphate binding site. The Proton donor role is filled by Glu417. Phe443 serves as a coordination point for thiamine diphosphate. Positions 467, 475, and 526 each coordinate substrate.

Belongs to the transketolase family. In terms of assembly, homodimer. It depends on Mg(2+) as a cofactor. The cofactor is Ca(2+). Mn(2+) serves as cofactor. Co(2+) is required as a cofactor. Requires thiamine diphosphate as cofactor.

It carries out the reaction D-sedoheptulose 7-phosphate + D-glyceraldehyde 3-phosphate = aldehydo-D-ribose 5-phosphate + D-xylulose 5-phosphate. It participates in carbohydrate biosynthesis; Calvin cycle. Its function is as follows. Catalyzes the transfer of a two-carbon ketol group from a ketose donor to an aldose acceptor, via a covalent intermediate with the cofactor thiamine pyrophosphate. This chain is Transketolase, chromosomal (cbbTC), found in Cupriavidus necator (strain ATCC 17699 / DSM 428 / KCTC 22496 / NCIMB 10442 / H16 / Stanier 337) (Ralstonia eutropha).